A 690-amino-acid chain; its full sequence is Elongation factor G (690 aa).

The region spanning 8 to 283 (SKCRNIGIMA…AVVDFLPAPN (276 aa)) is the tr-type G domain. GTP contacts are provided by residues 17–24 (AHIDAGKT), 81–85 (DTPGH), and 135–138 (NKMD).

It belongs to the TRAFAC class translation factor GTPase superfamily. Classic translation factor GTPase family. EF-G/EF-2 subfamily.

It localises to the cytoplasm. In terms of biological role, catalyzes the GTP-dependent ribosomal translocation step during translation elongation. During this step, the ribosome changes from the pre-translocational (PRE) to the post-translocational (POST) state as the newly formed A-site-bound peptidyl-tRNA and P-site-bound deacylated tRNA move to the P and E sites, respectively. Catalyzes the coordinated movement of the two tRNA molecules, the mRNA and conformational changes in the ribosome. This is Elongation factor G from Ehrlichia chaffeensis (strain ATCC CRL-10679 / Arkansas).